Reading from the N-terminus, the 1367-residue chain is Protein patched homolog 3 (1367 aa).

At 1–97 (MSFPDEETDL…WLFRIGCFVQ (97 aa)) the chain is on the cytoplasmic side. The helical transmembrane segment at 98-118 (RWAWSTIFISLFLYCLCLGGL) threads the bilayer. The Extracellular portion of the chain corresponds to 119 to 625 (RHVTIETDLV…IADMLEEFSQ (507 aa)). N-linked (GlcNAc...) asparagine glycans are attached at residues asparagine 235, asparagine 310, asparagine 454, and asparagine 591. Residues 626-646 (FNYIIIVIGYILMVIYAAFTQ) traverse the membrane as a helical segment. In terms of domain architecture, SSD spans 627–788 (NYIIIVIGYI…MFIFPAMIGI (162 aa)). The Cytoplasmic segment spans residues 647–659 (GRFQGWWLAVQSN). Residues 660–680 (VALAICGVILVTISSICGLGF) form a helical membrane-spanning segment. Over 681–694 (ATHLGINFNAATTQ) the chain is Extracellular. Residues 695–715 (VVPFLSLGLGIDDMFLLLHNY) form a helical membrane-spanning segment. Over 716-737 (DEIINICNKNEIGVLLKETGMS) the chain is Cytoplasmic. A helical transmembrane segment spans residues 738–758 (VMLTSINNILAFISGYVLPIP). At 759-767 (ALRSFCSQT) the chain is on the extracellular side. Residues 768 to 788 (AILLAFNLIFLMFIFPAMIGI) form a helical membrane-spanning segment. At 789-863 (DLRRQRKGKR…KIYIPALKNN (75 aa)) the chain is on the cytoplasmic side. Residues 864-884 (VVKACVLIGTTTAVVFGLYGM) traverse the membrane as a helical segment. Residues 885 to 1143 (YTSTLGLELA…WEQYLTLRWN (259 aa)) lie on the Extracellular side of the membrane. Residues 1144-1164 (LFQAICIIALAVFCVISILMF) traverse the membrane as a helical segment. Residues 1165 to 1171 (NPWAATL) lie on the Cytoplasmic side of the membrane. Residues 1172-1192 (IMCIVVITTIELGGFMGLMGI) traverse the membrane as a helical segment. Topologically, residues 1193 to 1199 (KMNPISA) are extracellular. Residues 1200 to 1220 (VTLICAVGIGVEFTAHVELAF) traverse the membrane as a helical segment. Over 1221-1237 (LTALGTIDQRLESCLQH) the chain is Cytoplasmic. A helical membrane pass occupies residues 1238 to 1258 (MFVPVYHGAISTFLGVVMLVF). Residues 1259–1273 (SEFDFVVTYFFYTMT) lie on the Extracellular side of the membrane. Residues 1274–1294 (LLVALGVFNGLCVLPVILTLV) traverse the membrane as a helical segment. The Cytoplasmic segment spans residues 1295–1367 (GPKPELTPTD…SDDESSPAHK (73 aa)). The disordered stretch occupies residues 1302–1367 (PTDGSSVLPP…SDDESSPAHK (66 aa)). Positions 1346 to 1356 (RDSPSTSSASH) are enriched in low complexity.

This sequence belongs to the patched family. In males, expressed in the precursor and mature sensory rays, the cloaca, and pre-anal ganglia and cephalic neurons. Also expressed in five cells in the valve region between the seminal vesicle and vas deferens of the somatic gonad.

It localises to the apical cell membrane. The protein resides in the cell junction. Its subcellular location is the adherens junction. Its function is as follows. Regulates osmosis during embryonic development. Required for larval development and in particular is involved in larval molting. This chain is Protein patched homolog 3, found in Caenorhabditis elegans.